The following is a 222-amino-acid chain: Glutathione S-transferase A1 (222 aa).

Methionine 1 carries the post-translational modification N-acetylmethionine. Residue alanine 2 is modified to N-acetylalanine; in Glutathione S-transferase A1, N-terminally processed. The 81-residue stretch at glycine 3–glycine 83 folds into the GST N-terminal domain. N6-succinyllysine is present on lysine 4. Glutathione is bound by residues tyrosine 9, lysine 45, glutamine 54–valine 55, and glutamine 67–threonine 68. In terms of domain architecture, GST C-terminal spans aspartate 85–threonine 208.

The protein belongs to the GST superfamily. Alpha family. In terms of assembly, homodimer or heterodimer of GSTA1 and GSTA2. As to expression, expressed in corpus luteum, adrenal gland, testis, liver, lung, thyroid and kidney.

It is found in the cytoplasm. The catalysed reaction is RX + glutathione = an S-substituted glutathione + a halide anion + H(+). It carries out the reaction prostaglandin A2 + glutathione = prostaglandin A2-S-(R)-glutathione. The enzyme catalyses prostaglandin J2 + glutathione = prostaglandin J2-S-(R)-glutathione. It catalyses the reaction (13S)-hydroperoxy-(9Z,11E)-octadecadienoate + 2 glutathione = (13S)-hydroxy-(9Z,11E)-octadecadienoate + glutathione disulfide + H2O. The catalysed reaction is androst-5-ene-3,17-dione = androst-4-ene-3,17-dione. Its function is as follows. Glutathione S-transferase that catalyzes the nucleophilic attack of the sulfur atom of glutathione on the electrophilic groups of a wide range of exogenous and endogenous compounds. Involved in the formation of glutathione conjugates of both prostaglandin A2 (PGA2) and prostaglandin J2 (PGJ2). It also catalyzes the isomerization of D5-androstene-3,17-dione (AD) into D4-androstene-3,17-dione and may therefore play an important role in hormone biosynthesis. Through its glutathione-dependent peroxidase activity toward the fatty acid hydroperoxide (13S)-hydroperoxy-(9Z,11E)-octadecadienoate/13-HPODE it is also involved in the metabolism of oxidized linoleic acid. This chain is Glutathione S-transferase A1 (GSTA1), found in Bos taurus (Bovine).